Consider the following 49-residue polypeptide: Small ribosomal subunit protein eS31 (49 aa).

Residues cysteine 21, cysteine 24, cysteine 39, and cysteine 42 each contribute to the Zn(2+) site. The C4-type zinc-finger motif lies at 21-42 (CPRCGPGVFLADHKNRLACGKC).

This sequence belongs to the eukaryotic ribosomal protein eS31 family. Part of the 30S ribosomal subunit. The cofactor is Zn(2+).

In Methanosarcina mazei (strain ATCC BAA-159 / DSM 3647 / Goe1 / Go1 / JCM 11833 / OCM 88) (Methanosarcina frisia), this protein is Small ribosomal subunit protein eS31.